The sequence spans 98 residues: Cell division protein FtsB (98 aa).

Residues 1–3 (MKR) lie on the Cytoplasmic side of the membrane. Residues 4 to 21 (LLIVLIALLAMLEYRLWF) form a helical membrane-spanning segment. At 22 to 98 (GDKSLAESFH…GGERDKPSND (77 aa)) the chain is on the periplasmic side. Residues 31–74 (HLQEQIKLQQQSNAQLVARNQILREEISDLRSGTEALEERARNE) adopt a coiled-coil conformation.

This sequence belongs to the FtsB family. Part of a complex composed of FtsB, FtsL and FtsQ.

The protein localises to the cell inner membrane. In terms of biological role, essential cell division protein. May link together the upstream cell division proteins, which are predominantly cytoplasmic, with the downstream cell division proteins, which are predominantly periplasmic. This Shewanella halifaxensis (strain HAW-EB4) protein is Cell division protein FtsB.